We begin with the raw amino-acid sequence, 642 residues long: Arginine--tRNA ligase (642 aa).

The short motif at 133–143 (VNPTKPLHMGH) is the 'HIGH' region element.

It belongs to the class-I aminoacyl-tRNA synthetase family.

It localises to the cytoplasm. It carries out the reaction tRNA(Arg) + L-arginine + ATP = L-arginyl-tRNA(Arg) + AMP + diphosphate. This chain is Arginine--tRNA ligase, found in Thermococcus kodakarensis (strain ATCC BAA-918 / JCM 12380 / KOD1) (Pyrococcus kodakaraensis (strain KOD1)).